The sequence spans 248 residues: 1-(5-phosphoribosyl)-5-[(5-phosphoribosylamino)methylideneamino] imidazole-4-carboxamide isomerase (248 aa).

Aspartate 8 functions as the Proton acceptor in the catalytic mechanism. Residue aspartate 129 is the Proton donor of the active site.

It belongs to the HisA/HisF family.

It is found in the cytoplasm. It carries out the reaction 1-(5-phospho-beta-D-ribosyl)-5-[(5-phospho-beta-D-ribosylamino)methylideneamino]imidazole-4-carboxamide = 5-[(5-phospho-1-deoxy-D-ribulos-1-ylimino)methylamino]-1-(5-phospho-beta-D-ribosyl)imidazole-4-carboxamide. It participates in amino-acid biosynthesis; L-histidine biosynthesis; L-histidine from 5-phospho-alpha-D-ribose 1-diphosphate: step 4/9. This is 1-(5-phosphoribosyl)-5-[(5-phosphoribosylamino)methylideneamino] imidazole-4-carboxamide isomerase from Rhizobium johnstonii (strain DSM 114642 / LMG 32736 / 3841) (Rhizobium leguminosarum bv. viciae).